A 337-amino-acid polypeptide reads, in one-letter code: Serpentine receptor class alpha-17 (337 aa).

6 helical membrane-spanning segments follow: residues leucine 28–isoleucine 48, glutamate 110–phenylalanine 130, isoleucine 155–valine 175, phenylalanine 197–valine 217, cysteine 247–isoleucine 267, and isoleucine 282–phenylalanine 302.

It belongs to the nematode receptor-like protein sra family.

It localises to the membrane. The chain is Serpentine receptor class alpha-17 (sra-17) from Caenorhabditis elegans.